A 293-amino-acid chain; its full sequence is Pyridoxal 5'-phosphate synthase subunit PdxS (293 aa).

A D-ribose 5-phosphate-binding site is contributed by Asp23. Catalysis depends on Lys80, which acts as the Schiff-base intermediate with D-ribose 5-phosphate. Residue Gly152 coordinates D-ribose 5-phosphate. Arg164 contacts D-glyceraldehyde 3-phosphate. D-ribose 5-phosphate contacts are provided by residues Gly213 and 234-235 (GS).

The protein belongs to the PdxS/SNZ family. As to quaternary structure, in the presence of PdxT, forms a dodecamer of heterodimers.

It carries out the reaction aldehydo-D-ribose 5-phosphate + D-glyceraldehyde 3-phosphate + L-glutamine = pyridoxal 5'-phosphate + L-glutamate + phosphate + 3 H2O + H(+). The protein operates within cofactor biosynthesis; pyridoxal 5'-phosphate biosynthesis. Catalyzes the formation of pyridoxal 5'-phosphate from ribose 5-phosphate (RBP), glyceraldehyde 3-phosphate (G3P) and ammonia. The ammonia is provided by the PdxT subunit. Can also use ribulose 5-phosphate and dihydroxyacetone phosphate as substrates, resulting from enzyme-catalyzed isomerization of RBP and G3P, respectively. This is Pyridoxal 5'-phosphate synthase subunit PdxS from Chloroflexus aurantiacus (strain ATCC 29366 / DSM 635 / J-10-fl).